The following is a 420-amino-acid chain: Serine--tRNA ligase (420 aa).

T225–E227 provides a ligand contact to L-serine. R256–E258 is an ATP binding site. Position 279 (E279) interacts with L-serine. E343 to S346 serves as a coordination point for ATP. Position 379 (T379) interacts with L-serine.

It belongs to the class-II aminoacyl-tRNA synthetase family. Type-1 seryl-tRNA synthetase subfamily. In terms of assembly, homodimer. The tRNA molecule binds across the dimer.

Its subcellular location is the cytoplasm. The catalysed reaction is tRNA(Ser) + L-serine + ATP = L-seryl-tRNA(Ser) + AMP + diphosphate + H(+). The enzyme catalyses tRNA(Sec) + L-serine + ATP = L-seryl-tRNA(Sec) + AMP + diphosphate + H(+). The protein operates within aminoacyl-tRNA biosynthesis; selenocysteinyl-tRNA(Sec) biosynthesis; L-seryl-tRNA(Sec) from L-serine and tRNA(Sec): step 1/1. Catalyzes the attachment of serine to tRNA(Ser). Is also able to aminoacylate tRNA(Sec) with serine, to form the misacylated tRNA L-seryl-tRNA(Sec), which will be further converted into selenocysteinyl-tRNA(Sec). The chain is Serine--tRNA ligase from Mycoplasma pneumoniae (strain ATCC 29342 / M129 / Subtype 1) (Mycoplasmoides pneumoniae).